A 578-amino-acid polypeptide reads, in one-letter code: Proline--tRNA ligase (578 aa).

The protein belongs to the class-II aminoacyl-tRNA synthetase family. ProS type 1 subfamily. Homodimer.

The protein resides in the cytoplasm. The catalysed reaction is tRNA(Pro) + L-proline + ATP = L-prolyl-tRNA(Pro) + AMP + diphosphate. Functionally, catalyzes the attachment of proline to tRNA(Pro) in a two-step reaction: proline is first activated by ATP to form Pro-AMP and then transferred to the acceptor end of tRNA(Pro). As ProRS can inadvertently accommodate and process non-cognate amino acids such as alanine and cysteine, to avoid such errors it has two additional distinct editing activities against alanine. One activity is designated as 'pretransfer' editing and involves the tRNA(Pro)-independent hydrolysis of activated Ala-AMP. The other activity is designated 'posttransfer' editing and involves deacylation of mischarged Ala-tRNA(Pro). The misacylated Cys-tRNA(Pro) is not edited by ProRS. In Paraburkholderia xenovorans (strain LB400), this protein is Proline--tRNA ligase.